Consider the following 169-residue polypeptide: Glycine-rich RNA-binding protein 8 (169 aa).

An RRM domain is found at 6 to 84 (YRCFVGGLAW…RVITVNEAQS (79 aa)). Arginine 47 is modified (ADP-ribosylarginine; by HopU1). Residues 80 to 99 (NEAQSRGSGGGGGGRGGSGG) form a disordered region. The segment covering 86-99 (GSGGGGGGRGGSGG) has biased composition (gly residues). Positions 86–168 (GSGGGGGGRG…GGSYGGGGGG (83 aa)) are glycine-rich (GR) required for cell-to-cell movement. The nuclear targeting sequence (M9) stretch occupies residues 95 to 143 (GGSGGGYRSGGGGGYSGGGGGGYSGGGGGGYERRSGGYGSGGGGGGRGY). Serine 103 bears the Phosphoserine mark. A disordered region spans residues 130–169 (GGYGSGGGGGGRGYGGGGRREGGGYGGGDGGSYGGGGGGW).

Belongs to the GR-RBP family. As to quaternary structure, interacts with TRN1. Binds to small phloem-mobile single-stranded RNAs (ss-sRNA, e.g. small interfering RNA (siRNA) and microRNA (miRNA)) in the phloeme exudate, including viral-derived sRNA (vsiRNA). ADP-ribosylated by the Pseudomonas syringae type III effector HopU1. ADP-ribosylation reduces the ability of the protein to bind RNA. In terms of tissue distribution, ubiquitous.

It is found in the cytoplasm. The protein resides in the nucleus. It localises to the secreted. Functionally, plays a role in RNA transcription or processing during stress. Binds RNAs and DNAs sequence with a preference to single-stranded nucleic acids. Involved in mRNA alternative splicing of numerous targets by modulating splice site selection. Negatively regulates the circadian oscillations of its own transcript as well as RBG7 transcript. Forms an interlocked post-transcriptional negative feedback loop with the RBG7 autoregulatory circuit. Both proteins negatively autoregulate and reciprocally crossregulate by binding to their pre-mRNAs and promoting unproductive splicing coupled to degradation via the NMD pathway. Target of the Pseudomonas syringae type III effector HopU1. Mediates cell-to-cell trafficking of RNA interference (RNAi) signals (small RNAs (sRNA), e.g. small interfering RNA (siRNA) and microRNA (miRNA)) which regulate growth and development, as well as responses to environmental inputs, including pathogen attack; can compromise zucchini yellow mosaic virus (ZYMV) and tobacco rattle virus (TRV) infections at the early stage. The sequence is that of Glycine-rich RNA-binding protein 8 from Arabidopsis thaliana (Mouse-ear cress).